The following is a 421-amino-acid chain: MSNNEFHQRRLSATPRGVGVMCNFFAQSAENATLKDVEGNEYIDFAAGIAVLNTGHRHPDLVAAVEQQLQQFTHTAYQIVPYESYVTLAEKINALAPVSGQAKTAFFTTGAEAVENAVKIARAHTGRPGVIAFSGGFHGRTYMTMALTGKVAPYKIGFGPFPGSVYHVPYPSDLHGISTQDSLDAIERLFKSDIEAKQVAAIIFEPVQGEGGFNVAPKELVAAIRRLCDEHGIVMIADEVQSGFARTGKLFAMDHYADKPDLMTMAKSLAGGMPLSGVVGNANIMDAPAPGGLGGTYAGNPLAVAAAHAVLNIIDKESLCERANQLGQRLKNTLIDAKESVPAIAAVRGLGSMIAVEFNDPQTGEPSAAIAQKIQQRALAQGLLLLTCGAYGNVIRFLYPLTIPDAQFDAAMKILQDALSD.

Residues 110–111 (GA) and 238–241 (DEVQ) contribute to the pyridoxal 5'-phosphate site. Lys-267 is modified (N6-(pyridoxal phosphate)lysine). Residue Thr-296 participates in pyridoxal 5'-phosphate binding.

The protein belongs to the class-III pyridoxal-phosphate-dependent aminotransferase family. Pyridoxal 5'-phosphate is required as a cofactor.

The catalysed reaction is 4-aminobutanoate + 2-oxoglutarate = succinate semialdehyde + L-glutamate. Its pathway is amine and polyamine degradation; putrescine degradation; succinate semialdehyde from 4-aminobutanoate. With respect to regulation, completely inhibited by succinate and low-aeration conditions. Functionally, catalyzes the transfer of the amino group from gamma-aminobutyrate (GABA) to alpha-ketoglutarate (KG) to yield succinic semialdehyde (SSA). PuuE is important for utilization of putrescine as the sole nitrogen or carbon source. In Escherichia coli (strain K12), this protein is 4-aminobutyrate aminotransferase PuuE (puuE).